We begin with the raw amino-acid sequence, 425 residues long: GTPase Obg (425 aa).

Residues 1–158 enclose the Obg domain; the sequence is MFIDKARIFV…RWITLELKMI (158 aa). Residues 159–330 enclose the OBG-type G domain; the sequence is ADVGLLGFPN…VIAYVSKMLK (172 aa). Residues 165–172, 190–194, 212–215, 282–285, and 311–313 contribute to the GTP site; these read GFPNVGKS, FTTLT, DIPG, NKFD, and SAA. Mg(2+) contacts are provided by Ser172 and Thr192. An OCT domain is found at 344-425; that stretch reads YRPELDIGTE…IYELEFEFYN (82 aa).

The protein belongs to the TRAFAC class OBG-HflX-like GTPase superfamily. OBG GTPase family. In terms of assembly, monomer. Mg(2+) is required as a cofactor.

The protein localises to the cytoplasm. Functionally, an essential GTPase which binds GTP, GDP and possibly (p)ppGpp with moderate affinity, with high nucleotide exchange rates and a fairly low GTP hydrolysis rate. Plays a role in control of the cell cycle, stress response, ribosome biogenesis and in those bacteria that undergo differentiation, in morphogenesis control. This is GTPase Obg from Clostridioides difficile (strain 630) (Peptoclostridium difficile).